Reading from the N-terminus, the 396-residue chain is Phosphoglycerate kinase (396 aa).

Substrate-binding positions include 21–23 (DIN), arginine 36, 59–62 (HFGR), arginine 114, and arginine 147. ATP is bound by residues lysine 197, glutamate 319, and 349-352 (GGDT).

Belongs to the phosphoglycerate kinase family. Monomer.

It is found in the cytoplasm. It carries out the reaction (2R)-3-phosphoglycerate + ATP = (2R)-3-phospho-glyceroyl phosphate + ADP. Its pathway is carbohydrate degradation; glycolysis; pyruvate from D-glyceraldehyde 3-phosphate: step 2/5. The sequence is that of Phosphoglycerate kinase from Jannaschia sp. (strain CCS1).